The sequence spans 363 residues: Spermidine/putrescine import ATP-binding protein PotA (363 aa).

The ABC transporter domain occupies 5–236 (IKLKHVRKEY…PVNDFVARFI (232 aa)). 38–45 (GPSGSGKT) is a binding site for ATP.

Belongs to the ABC transporter superfamily. Spermidine/putrescine importer (TC 3.A.1.11.1) family. As to quaternary structure, the complex is composed of two ATP-binding proteins (PotA), two transmembrane proteins (PotB and PotC) and a solute-binding protein (PotD).

It is found in the cell membrane. It catalyses the reaction ATP + H2O + polyamine-[polyamine-binding protein]Side 1 = ADP + phosphate + polyamineSide 2 + [polyamine-binding protein]Side 1.. Part of the ABC transporter complex PotABCD involved in spermidine/putrescine import. Responsible for energy coupling to the transport system. The chain is Spermidine/putrescine import ATP-binding protein PotA from Lactobacillus johnsonii (strain CNCM I-12250 / La1 / NCC 533).